Consider the following 159-residue polypeptide: Large ribosomal subunit protein uL15 (159 aa).

Residues L21–V34 are compositionally biased toward basic residues. The interval L21–R55 is disordered.

It belongs to the universal ribosomal protein uL15 family. As to quaternary structure, part of the 50S ribosomal subunit.

Binds to the 23S rRNA. The sequence is that of Large ribosomal subunit protein uL15 from Frankia casuarinae (strain DSM 45818 / CECT 9043 / HFP020203 / CcI3).